A 366-amino-acid polypeptide reads, in one-letter code: Putative actin-9 (366 aa).

It belongs to the actin family. Polymerization of globular actin (G-actin) leads to a structural filament (F-actin) in the form of a two-stranded helix. The binding of profilin to monomeric G-actin cause the sequestration of actin into profilactin complexes, and prevents the polymerization.

It is found in the cytoplasm. The protein localises to the cytoskeleton. Actins are highly conserved proteins that are involved in various types of cell motility and are ubiquitously expressed in all eukaryotic cells. Essential component of cell cytoskeleton; plays an important role in cytoplasmic streaming, cell shape determination, cell division, organelle movement and extension growth. In Arabidopsis thaliana (Mouse-ear cress), this protein is Putative actin-9 (ACT9).